The chain runs to 532 residues: 2,3-bisphosphoglycerate-independent phosphoglycerate mutase (532 aa).

Mn(2+) contacts are provided by D15 and S65. S65 functions as the Phosphoserine intermediate in the catalytic mechanism. Substrate contacts are provided by residues H126, 156 to 157 (RD), R188, R194, 258 to 261 (RPDR), and K331. Residues D398, H402, D439, H440, and H457 each contribute to the Mn(2+) site.

It belongs to the BPG-independent phosphoglycerate mutase family. As to quaternary structure, monomer. It depends on Mn(2+) as a cofactor.

It carries out the reaction (2R)-2-phosphoglycerate = (2R)-3-phosphoglycerate. It functions in the pathway carbohydrate degradation; glycolysis; pyruvate from D-glyceraldehyde 3-phosphate: step 3/5. In terms of biological role, catalyzes the interconversion of 2-phosphoglycerate and 3-phosphoglycerate. This is 2,3-bisphosphoglycerate-independent phosphoglycerate mutase from Synechococcus elongatus (strain ATCC 33912 / PCC 7942 / FACHB-805) (Anacystis nidulans R2).